The chain runs to 532 residues: 2,3-bisphosphoglycerate-independent phosphoglycerate mutase (532 aa).

The Mn(2+) site is built by Asp15 and Ser65. Catalysis depends on Ser65, which acts as the Phosphoserine intermediate. Residues His126, Arg156 to Asp157, Arg188, Arg194, Arg258 to Arg261, and Lys331 each bind substrate. Residues Asp398, His402, Asp439, His440, and His457 each coordinate Mn(2+).

It belongs to the BPG-independent phosphoglycerate mutase family. In terms of assembly, monomer. Mn(2+) serves as cofactor.

The enzyme catalyses (2R)-2-phosphoglycerate = (2R)-3-phosphoglycerate. Its pathway is carbohydrate degradation; glycolysis; pyruvate from D-glyceraldehyde 3-phosphate: step 3/5. Catalyzes the interconversion of 2-phosphoglycerate and 3-phosphoglycerate. This is 2,3-bisphosphoglycerate-independent phosphoglycerate mutase from Trichodesmium erythraeum (strain IMS101).